Reading from the N-terminus, the 359-residue chain is Pyruvate dehydrogenase E1 component subunit beta, mitochondrial (359 aa).

The N-terminal 30 residues, 1-30 (MAAVSGLVRRPLREVSGLLKRRFHWTAPAA), are a transit peptide targeting the mitochondrion. Tyr-67 is modified (phosphotyrosine). Glu-89 serves as a coordination point for thiamine diphosphate. Positions 142, 190, 191, 193, and 195 each coordinate K(+). Residue Lys-354 is modified to N6-acetyllysine.

In terms of assembly, heterotetramer of two PDHA1 and two PDHB subunits. The heterotetramer interacts with DLAT, and is part of the multimeric pyruvate dehydrogenase complex that contains multiple copies of pyruvate dehydrogenase (E1), dihydrolipoamide acetyltransferase (DLAT, E2) and lipoamide dehydrogenase (DLD, E3). These subunits are bound to an inner core composed of about 48 DLAT and 12 PDHX molecules. Interacts with DLAT. Requires thiamine diphosphate as cofactor.

The protein resides in the mitochondrion matrix. It carries out the reaction N(6)-[(R)-lipoyl]-L-lysyl-[protein] + pyruvate + H(+) = N(6)-[(R)-S(8)-acetyldihydrolipoyl]-L-lysyl-[protein] + CO2. Functionally, the pyruvate dehydrogenase complex catalyzes the overall conversion of pyruvate to acetyl-CoA and CO(2), and thereby links the glycolytic pathway to the tricarboxylic cycle. The chain is Pyruvate dehydrogenase E1 component subunit beta, mitochondrial (PDHB) from Homo sapiens (Human).